The primary structure comprises 397 residues: Decapping and exoribonuclease protein (397 aa).

Positions 1–20 (MESRGTKREAGKIEVAEPRN) are enriched in basic and acidic residues. The disordered stretch occupies residues 1 to 37 (MESRGTKREAGKIEVAEPRNKLPRPAPSLPTDPALYS). Substrate is bound at residue arginine 58. A disordered region spans residues 67–88 (LRYYSPPPTNGQSPNFDLRDGY). Substrate contacts are provided by residues glutamate 101 and 131 to 133 (WRG). Glutamate 192 contacts Mg(2+). Residues cysteine 217 and glutamate 234 each contribute to the substrate site. Mg(2+) contacts are provided by glutamate 234, aspartate 236, glutamate 253, and leucine 254. Substrate contacts are provided by lysine 255 and glutamine 280. A Phosphothreonine modification is found at threonine 392. At serine 394 the chain carries Phosphoserine.

It belongs to the DXO/Dom3Z family. Mg(2+) is required as a cofactor.

It is found in the nucleus. The catalysed reaction is a 5'-end triphospho-ribonucleoside in mRNA + H2O = a 5'-end phospho-ribonucleoside in mRNA + diphosphate + H(+). The enzyme catalyses a 5'-end NAD(+)-phospho-ribonucleoside in mRNA + H2O = a 5'-end phospho-ribonucleoside in mRNA + NAD(+) + H(+). It catalyses the reaction a 5'-end NAD(+)-phospho-ribonucleoside in snoRNA + H2O = a 5'-end phospho-ribonucleoside in snoRNA + NAD(+) + H(+). It carries out the reaction a 5'-end (N(7)-methyl 5'-triphosphoguanosine)-ribonucleoside-ribonucleotide in mRNA + H2O = a (N(7)-methyl 5'-triphosphoguanosine)-nucleoside + a 5'-end phospho-ribonucleoside in mRNA + H(+). The catalysed reaction is a 5'-end FAD-phospho-ribonucleoside in mRNA + H2O = a 5'-end phospho-ribonucleoside in mRNA + FAD + H(+). The enzyme catalyses a 5'-end CoA-ribonucleoside in mRNA + H2O = 3'-dephospho-CoA + a 5'-end phospho-ribonucleoside in mRNA + H(+). Functionally, decapping enzyme for NAD-capped RNAs: specifically hydrolyzes the nicotinamide adenine dinucleotide (NAD) cap from a subset of RNAs by removing the entire NAD moiety from the 5'-end of an NAD-capped RNA. The NAD-cap is present at the 5'-end of some RNAs and snoRNAs. In contrast to the canonical 5'-end N7 methylguanosine (m7G) cap, the NAD cap promotes mRNA decay. Preferentially acts on NAD-capped transcripts in response to environmental stress. Also acts as a non-canonical decapping enzyme that removes the entire cap structure of m7G capped or incompletely capped RNAs and mediates their subsequent degradation. Specifically degrades pre-mRNAs with a defective 5'-end m7G cap and is part of a pre-mRNA capping quality control. Has decapping activity toward incomplete 5'-end m7G cap mRNAs such as unmethylated 5'-end-capped RNA (cap0), while it has no activity toward 2'-O-ribose methylated m7G cap (cap1). In contrast to canonical decapping enzymes DCP2 and NUDT16, which cleave the cap within the triphosphate linkage, the decapping activity releases the entire cap structure GpppN and a 5'-end monophosphate RNA. Also has 5'-3' exoribonuclease activities: The 5'-end monophosphate RNA is then degraded by the 5'-3' exoribonuclease activity, enabling this enzyme to decap and degrade incompletely capped mRNAs. Also possesses RNA 5'-pyrophosphohydrolase activity by hydrolyzing the 5'-end triphosphate to release pyrophosphates. Exhibits decapping activity towards FAD-capped RNAs. Exhibits decapping activity towards dpCoA-capped RNAs in vitro. The polypeptide is Decapping and exoribonuclease protein (Bos taurus (Bovine)).